We begin with the raw amino-acid sequence, 189 residues long: Ribosome maturation factor RimM (189 aa).

Residues 110–189 (DDEYYWKDLI…TVTVDWDPNF (80 aa)) enclose the PRC barrel domain.

Belongs to the RimM family. As to quaternary structure, binds ribosomal protein uS19.

The protein localises to the cytoplasm. An accessory protein needed during the final step in the assembly of 30S ribosomal subunit, possibly for assembly of the head region. Essential for efficient processing of 16S rRNA. May be needed both before and after RbfA during the maturation of 16S rRNA. It has affinity for free ribosomal 30S subunits but not for 70S ribosomes. The polypeptide is Ribosome maturation factor RimM (Blochmanniella pennsylvanica (strain BPEN)).